The chain runs to 442 residues: Histidinol dehydrogenase (442 aa).

The disordered stretch occupies residues 1 to 20 (MLNVTDLRGQTPSKSDIRRA). NAD(+) contacts are provided by Tyr129, Gln193, and Asn218. The substrate site is built by Thr241, Gln263, and His266. Zn(2+) is bound by residues Gln263 and His266. Catalysis depends on proton acceptor residues Glu332 and His333. Positions 333, 366, 420, and 425 each coordinate substrate. Residue Asp366 participates in Zn(2+) binding. His425 is a Zn(2+) binding site.

This sequence belongs to the histidinol dehydrogenase family. It depends on Zn(2+) as a cofactor.

It carries out the reaction L-histidinol + 2 NAD(+) + H2O = L-histidine + 2 NADH + 3 H(+). It participates in amino-acid biosynthesis; L-histidine biosynthesis; L-histidine from 5-phospho-alpha-D-ribose 1-diphosphate: step 9/9. In terms of biological role, catalyzes the sequential NAD-dependent oxidations of L-histidinol to L-histidinaldehyde and then to L-histidine. The polypeptide is Histidinol dehydrogenase (Corynebacterium glutamicum (strain ATCC 13032 / DSM 20300 / JCM 1318 / BCRC 11384 / CCUG 27702 / LMG 3730 / NBRC 12168 / NCIMB 10025 / NRRL B-2784 / 534)).